The primary structure comprises 326 residues: UDP-3-O-acylglucosamine N-acyltransferase (326 aa).

His-225 functions as the Proton acceptor in the catalytic mechanism.

It belongs to the transferase hexapeptide repeat family. LpxD subfamily. Homotrimer.

The catalysed reaction is a UDP-3-O-[(3R)-3-hydroxyacyl]-alpha-D-glucosamine + a (3R)-hydroxyacyl-[ACP] = a UDP-2-N,3-O-bis[(3R)-3-hydroxyacyl]-alpha-D-glucosamine + holo-[ACP] + H(+). Its pathway is bacterial outer membrane biogenesis; LPS lipid A biosynthesis. Functionally, catalyzes the N-acylation of UDP-3-O-acylglucosamine using 3-hydroxyacyl-ACP as the acyl donor. Is involved in the biosynthesis of lipid A, a phosphorylated glycolipid that anchors the lipopolysaccharide to the outer membrane of the cell. The chain is UDP-3-O-acylglucosamine N-acyltransferase from Verminephrobacter eiseniae (strain EF01-2).